We begin with the raw amino-acid sequence, 195 residues long: Imidazoleglycerol-phosphate dehydratase (195 aa).

This sequence belongs to the imidazoleglycerol-phosphate dehydratase family.

Its subcellular location is the cytoplasm. The catalysed reaction is D-erythro-1-(imidazol-4-yl)glycerol 3-phosphate = 3-(imidazol-4-yl)-2-oxopropyl phosphate + H2O. It participates in amino-acid biosynthesis; L-histidine biosynthesis; L-histidine from 5-phospho-alpha-D-ribose 1-diphosphate: step 6/9. The chain is Imidazoleglycerol-phosphate dehydratase from Aromatoleum aromaticum (strain DSM 19018 / LMG 30748 / EbN1) (Azoarcus sp. (strain EbN1)).